The chain runs to 209 residues: Abscisic acid receptor PYL5 (209 aa).

Residues 44-196 are START-like; that stretch reads HAPGEHQCSS…NLTSLAEVSE (153 aa). C51 and C177 are joined by a disulfide. Residues K80, 109 to 114, 136 to 142, and E161 each bind abscisate; these read ATTSTE and RLRNYSS. Positions 105 to 109 match the Gate loop motif; the sequence is TGLPA. A Latch loop motif is present at residues 135 to 137; that stretch reads HRL.

This sequence belongs to the PYR/PYL/RCAR abscisic acid intracellular receptor family. In terms of assembly, monomer. Interacts with PP2C30. Binding to PP2C30 is dependent on the presence of abscisic acid (ABA). Interacts with PP2C51. Binding to PP2C51 is dependent on the presence of ABA. Interacts with PP2C50. Binding to PP2C50 is dependent on the presence of ABA. Interacts with PP2C53. Expressed in leaf sheaths and leaf blades. Expressed at low levels in roots, flowers and seeds.

The protein resides in the nucleus. It is found in the cytoplasm. Its subcellular location is the cytosol. Its function is as follows. Intracellular abscisic acid (ABA) receptor that functions as a positive regulator of ABA signaling pathway. Together with ABI5, PP2C30 and SAPK2, is part of an ABA signaling unit that modulates seed germination and early seedling growth. Acts as a positive regulator of abiotic stress-responsive gene expression. Inhibits the protein phosphatases PP2C06 and PP2C09 when activated by ABA. The sequence is that of Abscisic acid receptor PYL5 from Oryza sativa subsp. japonica (Rice).